A 109-amino-acid polypeptide reads, in one-letter code: Ribonuclease P protein component (109 aa).

It belongs to the RnpA family. As to quaternary structure, consists of a catalytic RNA component (M1 or rnpB) and a protein subunit.

It catalyses the reaction Endonucleolytic cleavage of RNA, removing 5'-extranucleotides from tRNA precursor.. In terms of biological role, RNaseP catalyzes the removal of the 5'-leader sequence from pre-tRNA to produce the mature 5'-terminus. It can also cleave other RNA substrates such as 4.5S RNA. The protein component plays an auxiliary but essential role in vivo by binding to the 5'-leader sequence and broadening the substrate specificity of the ribozyme. The chain is Ribonuclease P protein component from Streptococcus agalactiae serotype III (strain NEM316).